The primary structure comprises 250 residues: Small ribosomal subunit protein uS2 (250 aa).

The protein belongs to the universal ribosomal protein uS2 family.

This is Small ribosomal subunit protein uS2 from Albidiferax ferrireducens (strain ATCC BAA-621 / DSM 15236 / T118) (Rhodoferax ferrireducens).